A 348-amino-acid chain; its full sequence is Phosphate acyltransferase (348 aa).

Belongs to the PlsX family. Homodimer. Probably interacts with PlsY.

It is found in the cytoplasm. It catalyses the reaction a fatty acyl-[ACP] + phosphate = an acyl phosphate + holo-[ACP]. The protein operates within lipid metabolism; phospholipid metabolism. Its function is as follows. Catalyzes the reversible formation of acyl-phosphate (acyl-PO(4)) from acyl-[acyl-carrier-protein] (acyl-ACP). This enzyme utilizes acyl-ACP as fatty acyl donor, but not acyl-CoA. This Rhizobium etli (strain ATCC 51251 / DSM 11541 / JCM 21823 / NBRC 15573 / CFN 42) protein is Phosphate acyltransferase.